A 579-amino-acid polypeptide reads, in one-letter code: V-type ATP synthase alpha chain (579 aa).

Residue 238 to 245 participates in ATP binding; sequence GPFGAGKT.

Belongs to the ATPase alpha/beta chains family.

The enzyme catalyses ATP + H2O + 4 H(+)(in) = ADP + phosphate + 5 H(+)(out). In terms of biological role, produces ATP from ADP in the presence of a proton gradient across the membrane. The V-type alpha chain is a catalytic subunit. In Borrelia hermsii (strain HS1 / DAH), this protein is V-type ATP synthase alpha chain.